The sequence spans 462 residues: Fumarate hydratase class II (462 aa).

Substrate is bound by residues 98–100 (SGT), Arg-126, 129–132 (HPND), 139–141 (SSN), and Thr-187. The tract at residues 120–141 (GTRGKGRKVHPNDHVNKGQSSN) is disordered. Residue His-188 is the Proton donor/acceptor of the active site. The active site involves Ser-318. Substrate contacts are provided by residues Ser-319 and 324–326 (KVN).

This sequence belongs to the class-II fumarase/aspartase family. Fumarase subfamily. In terms of assembly, homotetramer.

The protein resides in the cytoplasm. It carries out the reaction (S)-malate = fumarate + H2O. It functions in the pathway carbohydrate metabolism; tricarboxylic acid cycle; (S)-malate from fumarate: step 1/1. In terms of biological role, involved in the TCA cycle. Catalyzes the stereospecific interconversion of fumarate to L-malate. The chain is Fumarate hydratase class II from Nitrosomonas europaea (strain ATCC 19718 / CIP 103999 / KCTC 2705 / NBRC 14298).